A 636-amino-acid polypeptide reads, in one-letter code: Probable potassium transport system protein Kup (636 aa).

A run of 12 helical transmembrane segments spans residues 22-42 (VGLL…SPLY), 64-84 (ILSL…VMFI), 115-135 (LMVI…MITP), 150-170 (FDGI…ALFL), 182-202 (LFGP…VHGI), 220-240 (FFVV…LALT), 261-281 (WFIL…ALLL), 293-313 (LLAP…ATVI), 351-371 (IYIG…VIGF), 383-403 (VAVT…MLLL), 408-428 (PLLA…FFAA), and 433-453 (IVQG…LMST).

It belongs to the HAK/KUP transporter (TC 2.A.72) family.

It is found in the cell inner membrane. The catalysed reaction is K(+)(in) + H(+)(in) = K(+)(out) + H(+)(out). Transport of potassium into the cell. Likely operates as a K(+):H(+) symporter. This chain is Probable potassium transport system protein Kup, found in Pseudomonas putida (strain ATCC 700007 / DSM 6899 / JCM 31910 / BCRC 17059 / LMG 24140 / F1).